Consider the following 205-residue polypeptide: 7-methyl-GTP pyrophosphatase (205 aa).

The active-site Proton acceptor is D79.

The protein belongs to the Maf family. YceF subfamily. Requires a divalent metal cation as cofactor.

The protein localises to the cytoplasm. It catalyses the reaction N(7)-methyl-GTP + H2O = N(7)-methyl-GMP + diphosphate + H(+). In terms of biological role, nucleoside triphosphate pyrophosphatase that hydrolyzes 7-methyl-GTP (m(7)GTP). May have a dual role in cell division arrest and in preventing the incorporation of modified nucleotides into cellular nucleic acids. The protein is 7-methyl-GTP pyrophosphatase of Paraburkholderia xenovorans (strain LB400).